The chain runs to 142 residues: NADH-quinone oxidoreductase subunit A 2 (142 aa).

A run of 3 helical transmembrane segments spans residues 18–38, 73–93, and 104–124; these read FLPL…LLLA, FYLI…IFAW, and GLVH…WLWL.

Belongs to the complex I subunit 3 family. In terms of assembly, NDH-1 is composed of 14 different subunits. Subunits NuoA, H, J, K, L, M, N constitute the membrane sector of the complex.

It localises to the cell inner membrane. The enzyme catalyses a quinone + NADH + 5 H(+)(in) = a quinol + NAD(+) + 4 H(+)(out). Its function is as follows. NDH-1 shuttles electrons from NADH, via FMN and iron-sulfur (Fe-S) centers, to quinones in the respiratory chain. The immediate electron acceptor for the enzyme in this species is believed to be ubiquinone. Couples the redox reaction to proton translocation (for every two electrons transferred, four hydrogen ions are translocated across the cytoplasmic membrane), and thus conserves the redox energy in a proton gradient. The protein is NADH-quinone oxidoreductase subunit A 2 of Geobacter sulfurreducens (strain ATCC 51573 / DSM 12127 / PCA).